Reading from the N-terminus, the 274-residue chain is uncharacterized protein (274 aa).

A coiled-coil region spans residues 99-206 (NNVISGYVDL…ESEMEIFIQK (108 aa)).

This is an uncharacterized protein from Dictyostelium discoideum (Social amoeba).